The chain runs to 1127 residues: Structural protein MDM1 (1127 aa).

Residues 85 to 273 (NAQIGKELES…WNLRIVSLSQ (189 aa)) enclose the PXA domain. Phosphoserine occurs at positions 670, 673, and 692. Residues 705-762 (SNNFRDNIASLTISIDQIEKELELLRHLILKADLTNNQMQLKILKKSQRTLLKELEMK) are a coiled coil. In terms of domain architecture, PX spans 782-905 (TKIYIRSYFS…RFLTDPTPFK (124 aa)).

The protein belongs to the sorting nexin family.

The protein localises to the cytoplasm. Functionally, essential for mitotic growth. Mediates organelle inheritance. In Saccharomyces cerevisiae (strain ATCC 204508 / S288c) (Baker's yeast), this protein is Structural protein MDM1 (MDM1).